A 387-amino-acid chain; its full sequence is EARP-interacting protein homolog (387 aa).

WD repeat units lie at residues 132-172 (TAHG…TKSV), 182-222 (KGQL…QIYC), 226-266 (AHGQ…EPVK), and 270-310 (EHSH…SEPF). A disordered region spans residues 311–339 (GHLVDDEDLSDQEDNPQEEKTKEPLQDSI). The span at 315-326 (DDEDLSDQEDNP) shows a compositional bias: acidic residues. One copy of the WD 5 repeat lies at 345–385 (EHEDSVYAVEWSSADPWLFASLSYDGRLVINRVPRALKYNI).

Belongs to the WD repeat EIPR1 family.

The protein localises to the golgi apparatus. It is found in the trans-Golgi network. May act as a component of endosomal retrieval machinery that is involved in protein transport from early endosomes to either recycling endosomes or the trans-Golgi network. This Xenopus laevis (African clawed frog) protein is EARP-interacting protein homolog.